We begin with the raw amino-acid sequence, 191 residues long: Fe/S biogenesis protein NfuA (191 aa).

Residues Cys-149 and Cys-152 each contribute to the [4Fe-4S] cluster site.

Belongs to the NfuA family. Homodimer. It depends on [4Fe-4S] cluster as a cofactor.

In terms of biological role, involved in iron-sulfur cluster biogenesis. Binds a 4Fe-4S cluster, can transfer this cluster to apoproteins, and thereby intervenes in the maturation of Fe/S proteins. Could also act as a scaffold/chaperone for damaged Fe/S proteins. This Salmonella arizonae (strain ATCC BAA-731 / CDC346-86 / RSK2980) protein is Fe/S biogenesis protein NfuA.